Consider the following 216-residue polypeptide: Sperm microtubule inner protein 8 (216 aa).

In terms of assembly, microtubule inner protein component of sperm flagellar doublet microtubules. In terms of tissue distribution, expressed in testis, prostate and placenta.

Its subcellular location is the cytoplasm. It localises to the cytoskeleton. The protein localises to the flagellum axoneme. Functionally, microtubule inner protein (MIP) part of the dynein-decorated doublet microtubules (DMTs) in flagellum axoneme. May serve to reinforce and thus stabilize the microtubule structure in the sperm flagella. This is Sperm microtubule inner protein 8 from Homo sapiens (Human).